Reading from the N-terminus, the 571-residue chain is Zinc metalloproteinase nas-15 (571 aa).

The N-terminal stretch at 1–15 is a signal peptide; it reads MREYVLIFLVAPVFA. Asparagine 92 carries an N-linked (GlcNAc...) asparagine glycan. The 194-residue stretch at 114–307 folds into the Peptidase M12A domain; it reads NAIKNRLQLW…FKINTLYGCP (194 aa). Cystine bridges form between cysteine 156–cysteine 306, cysteine 178–cysteine 197, cysteine 354–cysteine 388, cysteine 361–cysteine 381, and cysteine 370–cysteine 385. Histidine 205 is a Zn(2+) binding site. Glutamate 206 is an active-site residue. Zn(2+)-binding residues include histidine 209 and histidine 215. One can recognise a ShKT 1 domain in the interval 354–388; that stretch reads CRNLRGDCDDLAKQGWCIRNPGWMRANCPISCGMC. The span at 407 to 420 shows a compositional bias: low complexity; it reads TTTARPQKPVTQPI. Residues 407 to 426 are disordered; the sequence is TTTARPQKPVTQPIQPLPPV. 3 cysteine pairs are disulfide-bonded: cysteine 437–cysteine 471, cysteine 444–cysteine 464, and cysteine 453–cysteine 468. The ShKT 2 domain maps to 437–471; the sequence is CEDLRVDCLVLVSQRYCKISQNFMKSYCAKSCGFC. Positions 500 to 530 are disordered; that stretch reads IRSRSPAPPVSTTTKAAPTTSTTSAAPYSPT. The span at 509 to 527 shows a compositional bias: low complexity; that stretch reads VSTTTKAAPTTSTTSAAPY. Cystine bridges form between cysteine 536–cysteine 571, cysteine 543–cysteine 564, and cysteine 552–cysteine 568. In terms of domain architecture, ShKT 3 spans 536–571; that stretch reads CSDRKHFCSHWKSAGFCEGIFMNYMKKNCPASCGLC.

The cofactor is Zn(2+). As to expression, expressed in pharyngeal marginal cells and muscles.

It is found in the secreted. Metalloprotease. In Caenorhabditis elegans, this protein is Zinc metalloproteinase nas-15 (nas-15).